Consider the following 640-residue polypeptide: ATP-dependent rRNA helicase spb4 (640 aa).

The short motif at 14 to 42 is the Q motif element; that stretch reads WDAVTPALSEWVLEAMSSMGFTRMTPVQA. A Helicase ATP-binding domain is found at 45 to 249; the sequence is IPLFMAHKDV…RVGLRNPVKV (205 aa). 58–65 is a binding site for ATP; it reads AVTGSGKT. A DEAD box motif is present at residues 197-200; the sequence is DEAD. The 155-residue stretch at 283–437 folds into the Helicase C-terminal domain; that stretch reads ALKRIVSSVQ…SISFSDADAA (155 aa). Positions 521–629 form a coiled coil; it reads AYKDKQREKR…VAKAAGAKAD (109 aa). Disordered stretches follow at residues 531 to 593 and 607 to 640; these read RKEL…EEEK and RKKNEEERRLRRAVAKAAGAKADGDDEEEFQGFD. Over residues 577-593 the composition is skewed to basic and acidic residues; sequence KSKQEKARWEKMTEEEK. A compositionally biased stretch (acidic residues) spans 630–640; that stretch reads GDDEEEFQGFD.

The protein belongs to the DEAD box helicase family. DDX55/SPB4 subfamily. In terms of assembly, component of pre-60S ribosomal complexes.

The protein resides in the nucleus. The protein localises to the nucleolus. It carries out the reaction ATP + H2O = ADP + phosphate + H(+). ATP-binding RNA helicase involved in the biogenesis of 60S ribosomal subunits. Binds 90S pre-ribosomal particles and dissociates from pre-60S ribosomal particles after processing of 27SB pre-rRNA. Required for the normal formation of 18S rRNA through the processing of pre-rRNAs at sites A0, A1 and A2, and the normal formation of 25S and 5.8S rRNAs through the processing of pre-rRNAs at sites C1 and C2. In Aspergillus fumigatus (strain ATCC MYA-4609 / CBS 101355 / FGSC A1100 / Af293) (Neosartorya fumigata), this protein is ATP-dependent rRNA helicase spb4.